The chain runs to 182 residues: Transcription termination/antitermination protein NusG (182 aa).

A KOW domain is found at 131 to 161 (GEVVRVNDGPFADFNGTVEEVDYEKSRLKVS).

Belongs to the NusG family.

In terms of biological role, participates in transcription elongation, termination and antitermination. In Vibrio cholerae serotype O1 (strain ATCC 39315 / El Tor Inaba N16961), this protein is Transcription termination/antitermination protein NusG.